Here is a 336-residue protein sequence, read N- to C-terminus: MKLAVIGGDGIGPEVTAEALKVLDAVLPGVDKTEYDLGARRYHATGELLPDSVIDELRAHDAILLGAIGDPSVPSGVLERGLLLRLRFELDHHINLRPGRLYPGVSSPLAGNPDIDFVVVREGTEGPYTGTGGAIRVGTPNEVATEVSQNTAFGVRRVVVDAFERARRRRKHLTLVHKTNVLTFAGKLWSRIVAEVGRDYPDVEVAYQHIDAATIFMVTDPGRFDVIVTDNLFGDIITDLSAAVCGGIGLAASGNIDGTRTNPSMFEPVHGSAPDIAGQGIADPTAAIMSVALLLAHLGEDAAATRVDRAVERYLATRGNERPATTEVGERIAAAL.

Substrate-binding residues include R87, R97, R121, and D211. The Mg(2+) site is built by D211, D235, and D239. 271-283 (GSAPDIAGQGIAD) lines the NAD(+) pocket.

Belongs to the isocitrate and isopropylmalate dehydrogenases family. LeuB type 2 subfamily. As to quaternary structure, homodimer. Mg(2+) is required as a cofactor. It depends on Mn(2+) as a cofactor.

The protein resides in the cytoplasm. The enzyme catalyses (2R,3S)-3-isopropylmalate + NAD(+) = 4-methyl-2-oxopentanoate + CO2 + NADH. Its pathway is amino-acid biosynthesis; L-leucine biosynthesis; L-leucine from 3-methyl-2-oxobutanoate: step 3/4. Functionally, catalyzes the oxidation of 3-carboxy-2-hydroxy-4-methylpentanoate (3-isopropylmalate) to 3-carboxy-4-methyl-2-oxopentanoate. The product decarboxylates to 4-methyl-2 oxopentanoate. The chain is 3-isopropylmalate dehydrogenase from Mycolicibacterium paratuberculosis (strain ATCC BAA-968 / K-10) (Mycobacterium paratuberculosis).